We begin with the raw amino-acid sequence, 1020 residues long: Glycine dehydrogenase (decarboxylating), mitochondrial (1020 aa).

Residues 1 to 35 constitute a mitochondrion transit peptide; the sequence is MQSCARAWGLRLGRGVGGGRRLAGGSGPCWAPRSR. Positions 21–46 are disordered; it reads RLAGGSGPCWAPRSRDSSSGGGDSAA. Lys447, Lys514, Lys648, and Lys664 each carry N6-acetyllysine. The residue at position 754 (Lys754) is an N6-(pyridoxal phosphate)lysine.

This sequence belongs to the GcvP family. In terms of assembly, homodimer. Interacts with GCSH. The glycine cleavage system is composed of four proteins: P (GLDC), T (GCST), L (DLD) and H (GCSH). Pyridoxal 5'-phosphate is required as a cofactor.

It is found in the mitochondrion. It catalyses the reaction N(6)-[(R)-lipoyl]-L-lysyl-[glycine-cleavage complex H protein] + glycine + H(+) = N(6)-[(R)-S(8)-aminomethyldihydrolipoyl]-L-lysyl-[glycine-cleavage complex H protein] + CO2. Its activity is regulated as follows. Stimulated by lipoic acid. Inhibited in presence of methylamine. Functionally, the glycine cleavage system catalyzes the degradation of glycine. The P protein (GLDC) binds the alpha-amino group of glycine through its pyridoxal phosphate cofactor; CO(2) is released and the remaining methylamine moiety is then transferred to the lipoamide cofactor of the H protein (GCSH). This chain is Glycine dehydrogenase (decarboxylating), mitochondrial, found in Homo sapiens (Human).